The primary structure comprises 421 residues: RNA exonuclease 4 (421 aa).

2 disordered regions span residues 1–51 (MAKA…ETKK) and 79–179 (ENQA…QPPK). A compositionally biased stretch (polar residues) spans 11-24 (SPCSGSLGKTANTP). Over residues 25-36 (KQKRKQKQRKFW) the composition is skewed to basic residues. Composition is skewed to basic and acidic residues over residues 92–107 (PKKDQKVSEKKTEESV), 140–149 (AAEKSDEVSK), and 161–170 (DTEHQGKKPQ). The 152-residue stretch at 234–385 (TVAMDCEMVG…QDAQAAMRLY (152 aa)) folds into the Exonuclease domain.

It belongs to the REXO4 family.

The protein localises to the nucleus. The chain is RNA exonuclease 4 (rexo4) from Xenopus laevis (African clawed frog).